Consider the following 655-residue polypeptide: DNA topoisomerase 4 subunit B (655 aa).

Residues Y9, N49, D76, 116 to 122 (GLHGVGA), and K340 contribute to the ATP site. Residues 387–397 (AARKAREEARS) are compositionally biased toward basic and acidic residues. The interval 387-419 (AARKAREEARSGKKRKKSEATLSGKLTPAGSRN) is disordered. Residues 423–537 (NELYLVEGDS…HGKVFIALPP (115 aa)) enclose the Toprim domain. Residues E429, D502, and D504 each coordinate Mg(2+).

This sequence belongs to the type II topoisomerase family. ParE type 2 subfamily. Heterotetramer composed of ParC and ParE. The cofactor is Mg(2+). Requires Mn(2+) as cofactor. It depends on Ca(2+) as a cofactor.

The enzyme catalyses ATP-dependent breakage, passage and rejoining of double-stranded DNA.. In terms of biological role, topoisomerase IV is essential for chromosome segregation. It relaxes supercoiled DNA. Performs the decatenation events required during the replication of a circular DNA molecule. The protein is DNA topoisomerase 4 subunit B of Bacillus subtilis (strain 168).